The primary structure comprises 431 residues: MSVLTLKARAGADDVDALMREIGRQARAAARRMALVSGQQKDRGLRAAAAAIRAAAPAILEANRADLTEARAKDLPAATLDRLELTPARVEAIAAAVEAIAGLPDPVGRRLAAFERPNGLSIERIATPLGVVGVIFESRPNVTADAGALCLKAGNAAVLRAGSESLRSAAAIAAAMTEGLVAEGLPADAIQLVPTRDRAAVGAMLSGLDGCIDVIVPRGGKNLVARVQNEAKVPVFAHLEGICHVFVHAAADLAMARTIVRNSKLRRTGICGAAETLLVDRACASTHLAPLVLDLLEAGCAVRGDEATRAVDPRVTPASEADWRTEYLDAVIAVRVVEGLDAAIDHIETFGSHHTDAIVTHDTGAAERFLAEVDSAIVVHNASTQFADGGEFGFGAEIGIATGRMHARGPVGVEQLTTFKYRVHGSGQIRP.

Belongs to the gamma-glutamyl phosphate reductase family.

The protein resides in the cytoplasm. It carries out the reaction L-glutamate 5-semialdehyde + phosphate + NADP(+) = L-glutamyl 5-phosphate + NADPH + H(+). It participates in amino-acid biosynthesis; L-proline biosynthesis; L-glutamate 5-semialdehyde from L-glutamate: step 2/2. Functionally, catalyzes the NADPH-dependent reduction of L-glutamate 5-phosphate into L-glutamate 5-semialdehyde and phosphate. The product spontaneously undergoes cyclization to form 1-pyrroline-5-carboxylate. The polypeptide is Gamma-glutamyl phosphate reductase (Methylobacterium nodulans (strain LMG 21967 / CNCM I-2342 / ORS 2060)).